Here is a 380-residue protein sequence, read N- to C-terminus: Queuine tRNA-ribosyltransferase (380 aa).

The active-site Proton acceptor is the Asp96. Substrate-binding positions include Asp96 to Phe100, Asp150, Gln193, and Gly220. Residues Gly251–Ser257 are RNA binding. Asp270 serves as the catalytic Nucleophile. The RNA binding; important for wobble base 34 recognition stretch occupies residues Thr275–Arg279. Residues Cys308, Cys310, Cys313, and His339 each contribute to the Zn(2+) site.

The protein belongs to the queuine tRNA-ribosyltransferase family. As to quaternary structure, homodimer. Within each dimer, one monomer is responsible for RNA recognition and catalysis, while the other monomer binds to the replacement base PreQ1. Requires Zn(2+) as cofactor.

The enzyme catalyses 7-aminomethyl-7-carbaguanine + guanosine(34) in tRNA = 7-aminomethyl-7-carbaguanosine(34) in tRNA + guanine. It participates in tRNA modification; tRNA-queuosine biosynthesis. In terms of biological role, catalyzes the base-exchange of a guanine (G) residue with the queuine precursor 7-aminomethyl-7-deazaguanine (PreQ1) at position 34 (anticodon wobble position) in tRNAs with GU(N) anticodons (tRNA-Asp, -Asn, -His and -Tyr). Catalysis occurs through a double-displacement mechanism. The nucleophile active site attacks the C1' of nucleotide 34 to detach the guanine base from the RNA, forming a covalent enzyme-RNA intermediate. The proton acceptor active site deprotonates the incoming PreQ1, allowing a nucleophilic attack on the C1' of the ribose to form the product. After dissociation, two additional enzymatic reactions on the tRNA convert PreQ1 to queuine (Q), resulting in the hypermodified nucleoside queuosine (7-(((4,5-cis-dihydroxy-2-cyclopenten-1-yl)amino)methyl)-7-deazaguanosine). This is Queuine tRNA-ribosyltransferase from Streptococcus pyogenes serotype M1.